We begin with the raw amino-acid sequence, 419 residues long: UDP-N-acetylglucosamine 1-carboxyvinyltransferase (419 aa).

22–23 (KN) is a phosphoenolpyruvate binding site. Arginine 93 contacts UDP-N-acetyl-alpha-D-glucosamine. Catalysis depends on cysteine 117, which acts as the Proton donor. Residue cysteine 117 is modified to 2-(S-cysteinyl)pyruvic acid O-phosphothioketal. Residues aspartate 306 and valine 328 each contribute to the UDP-N-acetyl-alpha-D-glucosamine site.

The protein belongs to the EPSP synthase family. MurA subfamily.

Its subcellular location is the cytoplasm. It catalyses the reaction phosphoenolpyruvate + UDP-N-acetyl-alpha-D-glucosamine = UDP-N-acetyl-3-O-(1-carboxyvinyl)-alpha-D-glucosamine + phosphate. Its pathway is cell wall biogenesis; peptidoglycan biosynthesis. Cell wall formation. Adds enolpyruvyl to UDP-N-acetylglucosamine. The chain is UDP-N-acetylglucosamine 1-carboxyvinyltransferase from Thioalkalivibrio sulfidiphilus (strain HL-EbGR7).